The sequence spans 121 residues: MSTSYLCDENRKGENRKVEIQELVPYLYSVLLRGVPSRPVFDSRLKFAVKVPVYPKRPLYTTDTRTHYYLKNCFRILEWEIVSHVGGNELLINRRVIDVNNFFICQDANSGPFCTAWRFTH.

This is an uncharacterized protein from Schizosaccharomyces pombe (strain 972 / ATCC 24843) (Fission yeast).